Reading from the N-terminus, the 317-residue chain is Olfactory receptor 2B11 (317 aa).

At 1–29 (MKSDNHSFLGDSPKAFILLGVSDRPWLEL) the chain is on the extracellular side. The N-linked (GlcNAc...) asparagine glycan is linked to Asn5. Residues 30–53 (PLFVVLLLSYVLAMLGNVAIILAS) traverse the membrane as a helical segment. The Cytoplasmic portion of the chain corresponds to 54 to 61 (RVDPQLHS). Residues 62–83 (PMYIFLSHLSFLDLCYTTTTVP) form a helical membrane-spanning segment. Residues 84 to 104 (QMLVNMGSSQKTISYGGCTVQ) lie on the Extracellular side of the membrane. Cysteines 101 and 193 form a disulfide. The chain crosses the membrane as a helical span at residues 105-124 (YAVFHWLGCTECIVLAAMAL). At 125–143 (DRYVAICKPLHYAVLMHRA) the chain is on the cytoplasmic side. A helical transmembrane segment spans residues 144–162 (LCQQLVALAWLSGFGNSFV). Over 163–199 (QVVLTVQLPFCGRQVLNNFFCEVPAVIKLSCADTAVN) the chain is Extracellular. Asn199 carries an N-linked (GlcNAc...) asparagine glycan. A helical membrane pass occupies residues 200 to 223 (DTILAVLVAFFVLVPLALILLSYG). Over 224-240 (FIARAVLRIQSSKGRHK) the chain is Cytoplasmic. The chain crosses the membrane as a helical span at residues 241–263 (AFGTCSSHLMIVSLFYLPAIYMY). Over 264–276 (LQPPSSYSQEQGK) the chain is Extracellular. A helical membrane pass occupies residues 277–296 (FISLFYSIITPTLNPFTYTL). The Cytoplasmic portion of the chain corresponds to 297–317 (RNKDMKGALRRLLARIWRLCG).

It belongs to the G-protein coupled receptor 1 family.

It localises to the cell membrane. Functionally, odorant receptor. The polypeptide is Olfactory receptor 2B11 (OR2B11) (Homo sapiens (Human)).